Reading from the N-terminus, the 219-residue chain is Small ribosomal subunit protein uS3c (219 aa).

Positions 43–120 (IQNYIQKNMQ…KINITITKIT (78 aa)) constitute a KH type-2 domain.

The protein belongs to the universal ribosomal protein uS3 family. Part of the 30S ribosomal subunit.

It localises to the plastid. Its subcellular location is the chloroplast. The protein is Small ribosomal subunit protein uS3c (rps3) of Oenothera elata subsp. hookeri (Hooker's evening primrose).